We begin with the raw amino-acid sequence, 547 residues long: Chaperonin GroEL (547 aa).

Residues 30–33, K51, 87–91, G415, 479–481, and D495 contribute to the ATP site; these read TLGP, DGTTT, and NAA.

Belongs to the chaperonin (HSP60) family. Forms a cylinder of 14 subunits composed of two heptameric rings stacked back-to-back. Interacts with the co-chaperonin GroES.

The protein resides in the cytoplasm. It carries out the reaction ATP + H2O + a folded polypeptide = ADP + phosphate + an unfolded polypeptide.. Together with its co-chaperonin GroES, plays an essential role in assisting protein folding. The GroEL-GroES system forms a nano-cage that allows encapsulation of the non-native substrate proteins and provides a physical environment optimized to promote and accelerate protein folding. The chain is Chaperonin GroEL from Cupriavidus necator (strain ATCC 17699 / DSM 428 / KCTC 22496 / NCIMB 10442 / H16 / Stanier 337) (Ralstonia eutropha).